A 215-amino-acid chain; its full sequence is Adenylate kinase (215 aa).

ATP is bound at residue 10–15 (GAGKGT). Residues 30–59 (STGDMFRKAIKEETELGKEAKSYMDRGELV) are NMP. Residues T31, R36, 57 to 59 (ELV), 85 to 88 (GFPR), and Q92 each bind AMP. The segment at 126-163 (GRRICESCGTTYHLVFNPPKVEGICDIDGGKLYQREDD) is LID. Residue R127 participates in ATP binding. Residues C130 and C133 each contribute to the Zn(2+) site. Residue 136-137 (TY) coordinates ATP. The Zn(2+) site is built by C150 and D153. The AMP site is built by R160 and R171. K199 contacts ATP.

The protein belongs to the adenylate kinase family. In terms of assembly, monomer.

The protein resides in the cytoplasm. It carries out the reaction AMP + ATP = 2 ADP. Its pathway is purine metabolism; AMP biosynthesis via salvage pathway; AMP from ADP: step 1/1. Catalyzes the reversible transfer of the terminal phosphate group between ATP and AMP. Plays an important role in cellular energy homeostasis and in adenine nucleotide metabolism. The chain is Adenylate kinase from Staphylococcus aureus (strain COL).